Here is a 431-residue protein sequence, read N- to C-terminus: Glutamate-1-semialdehyde 2,1-aminomutase (431 aa).

At K270 the chain carries N6-(pyridoxal phosphate)lysine.

The protein belongs to the class-III pyridoxal-phosphate-dependent aminotransferase family. HemL subfamily. Homodimer. Requires pyridoxal 5'-phosphate as cofactor.

Its subcellular location is the cytoplasm. It catalyses the reaction (S)-4-amino-5-oxopentanoate = 5-aminolevulinate. Its pathway is porphyrin-containing compound metabolism; protoporphyrin-IX biosynthesis; 5-aminolevulinate from L-glutamyl-tRNA(Glu): step 2/2. The sequence is that of Glutamate-1-semialdehyde 2,1-aminomutase from Limosilactobacillus reuteri subsp. reuteri (strain JCM 1112) (Lactobacillus reuteri).